Here is a 158-residue protein sequence, read N- to C-terminus: MKAYMYDNQPGDQRLPHDSGRAISTEALGKLGVLYFHFANIADVDRLAADRGYKNRDEITVSPEKMGGMYEDKVKMFFNEHLHEDEEIRYIKGGQGFFDVRSKDDNWVRVRLEKDDLLILPAGIYHRFTTDEANVPVPRIVRTCHEALQGRAQMDAIE.

Fe(2+)-binding residues include H81, H83, E87, and H126. Ni(2+) is bound by residues H81, H83, E87, and H126.

It belongs to the acireductone dioxygenase (ARD) family. Fe(2+) is required as a cofactor. The cofactor is Ni(2+).

Its subcellular location is the cytoplasm. It localises to the nucleus. The catalysed reaction is 1,2-dihydroxy-5-(methylsulfanyl)pent-1-en-3-one + O2 = 4-methylsulfanyl-2-oxobutanoate + formate + 2 H(+). It carries out the reaction 1,2-dihydroxy-5-(methylsulfanyl)pent-1-en-3-one + O2 = 3-(methylsulfanyl)propanoate + CO + formate + 2 H(+). It functions in the pathway amino-acid biosynthesis; L-methionine biosynthesis via salvage pathway; L-methionine from S-methyl-5-thio-alpha-D-ribose 1-phosphate: step 5/6. Catalyzes 2 different reactions between oxygen and the acireductone 1,2-dihydroxy-3-keto-5-methylthiopentene (DHK-MTPene) depending upon the metal bound in the active site. Fe-containing acireductone dioxygenase (Fe-ARD) produces formate and 2-keto-4-methylthiobutyrate (KMTB), the alpha-ketoacid precursor of methionine in the methionine recycle pathway. Ni-containing acireductone dioxygenase (Ni-ARD) produces methylthiopropionate, carbon monoxide and formate, and does not lie on the methionine recycle pathway. This chain is Acireductone dioxygenase, found in Metarhizium robertsii (strain ARSEF 23 / ATCC MYA-3075) (Metarhizium anisopliae (strain ARSEF 23)).